Consider the following 205-residue polypeptide: Ribosome maturation factor RimP (205 aa).

The protein belongs to the RimP family.

The protein resides in the cytoplasm. Its function is as follows. Required for maturation of 30S ribosomal subunits. This Sinorhizobium fredii (strain NBRC 101917 / NGR234) protein is Ribosome maturation factor RimP.